The primary structure comprises 284 residues: Bifunctional protein FolD (284 aa).

NADP(+) contacts are provided by residues 166-168 (GAS) and Ile-232.

The protein belongs to the tetrahydrofolate dehydrogenase/cyclohydrolase family. Homodimer.

It carries out the reaction (6R)-5,10-methylene-5,6,7,8-tetrahydrofolate + NADP(+) = (6R)-5,10-methenyltetrahydrofolate + NADPH. The enzyme catalyses (6R)-5,10-methenyltetrahydrofolate + H2O = (6R)-10-formyltetrahydrofolate + H(+). The protein operates within one-carbon metabolism; tetrahydrofolate interconversion. Catalyzes the oxidation of 5,10-methylenetetrahydrofolate to 5,10-methenyltetrahydrofolate and then the hydrolysis of 5,10-methenyltetrahydrofolate to 10-formyltetrahydrofolate. The sequence is that of Bifunctional protein FolD from Shewanella amazonensis (strain ATCC BAA-1098 / SB2B).